The sequence spans 355 residues: Histidinol-phosphate aminotransferase 2 (355 aa).

The residue at position 210 (K210) is an N6-(pyridoxal phosphate)lysine.

The protein belongs to the class-II pyridoxal-phosphate-dependent aminotransferase family. Histidinol-phosphate aminotransferase subfamily. In terms of assembly, homodimer. It depends on pyridoxal 5'-phosphate as a cofactor.

The catalysed reaction is L-histidinol phosphate + 2-oxoglutarate = 3-(imidazol-4-yl)-2-oxopropyl phosphate + L-glutamate. It participates in amino-acid biosynthesis; L-histidine biosynthesis; L-histidine from 5-phospho-alpha-D-ribose 1-diphosphate: step 7/9. This chain is Histidinol-phosphate aminotransferase 2, found in Gluconobacter oxydans (strain 621H) (Gluconobacter suboxydans).